Consider the following 197-residue polypeptide: Probable chorismate pyruvate-lyase 2 (197 aa).

Basic and acidic residues predominate over residues 1-14 (MRFDAADAHWRETP). A disordered region spans residues 1 to 23 (MRFDAADAHWRETPRPGASSAQK). Residues Arg-73, Leu-111, and Glu-173 each contribute to the substrate site.

This sequence belongs to the UbiC family.

Its subcellular location is the cytoplasm. The catalysed reaction is chorismate = 4-hydroxybenzoate + pyruvate. It participates in cofactor biosynthesis; ubiquinone biosynthesis. Removes the pyruvyl group from chorismate, with concomitant aromatization of the ring, to provide 4-hydroxybenzoate (4HB) for the ubiquinone pathway. In Burkholderia pseudomallei (strain 1710b), this protein is Probable chorismate pyruvate-lyase 2.